The following is a 186-amino-acid chain: Ribosome-recycling factor (186 aa).

The protein belongs to the RRF family.

Its subcellular location is the cytoplasm. In terms of biological role, responsible for the release of ribosomes from messenger RNA at the termination of protein biosynthesis. May increase the efficiency of translation by recycling ribosomes from one round of translation to another. This Chlorobaculum parvum (strain DSM 263 / NCIMB 8327) (Chlorobium vibrioforme subsp. thiosulfatophilum) protein is Ribosome-recycling factor.